We begin with the raw amino-acid sequence, 119 residues long: Holo-[acyl-carrier-protein] synthase (119 aa).

Mg(2+) is bound by residues Asp-5 and Glu-51.

Belongs to the P-Pant transferase superfamily. AcpS family. Mg(2+) serves as cofactor.

It is found in the cytoplasm. It catalyses the reaction apo-[ACP] + CoA = holo-[ACP] + adenosine 3',5'-bisphosphate + H(+). In terms of biological role, transfers the 4'-phosphopantetheine moiety from coenzyme A to a Ser of acyl-carrier-protein. The sequence is that of Holo-[acyl-carrier-protein] synthase from Helicobacter pylori (strain ATCC 700392 / 26695) (Campylobacter pylori).